A 241-amino-acid polypeptide reads, in one-letter code: Zinc finger CCHC domain-containing protein 17 (241 aa).

One can recognise an S1 motif domain in the interval 16-88; that stretch reads YTIFQGEVAM…DRIKVSLSMK (73 aa). S114 carries the phosphoserine modification. A CCHC-type zinc finger spans residues 131–148; sequence TTCKKCGCKGHFAKDCFM. K144 is modified (N6-acetyllysine). The disordered stretch occupies residues 161-241; that stretch reads EEEEKEEAKS…KKKHKKKHKE (81 aa). Positions 166–178 are enriched in basic and acidic residues; it reads EEAKSAEFEKPDP. Positions 182–198 are enriched in basic residues; sequence PSRKRKKEKKKKKHRDR. Residue S183 is modified to Phosphoserine. Over residues 211-225 the composition is skewed to basic and acidic residues; it reads DTGKRARHTSKDSKA. A compositionally biased stretch (basic residues) spans 226 to 241; sequence AKKKKKKKKHKKKHKE.

Interacts with PNN. Associates with the 60S ribosomal subunit.

Its subcellular location is the nucleus. It localises to the nucleolus. The sequence is that of Zinc finger CCHC domain-containing protein 17 (ZCCHC17) from Homo sapiens (Human).